The sequence spans 520 residues: Developmental regulatory protein wetA (520 aa).

Disordered stretches follow at residues alanine 110–arginine 149, histidine 260–serine 294, threonine 388–lysine 453, and leucine 471–lysine 496. Residues proline 261–serine 294 show a composition bias toward low complexity. Over residues threonine 388–leucine 401 the composition is skewed to polar residues. A compositionally biased stretch (basic residues) spans proline 420–lysine 429. Positions asparagine 436–lysine 453 are enriched in low complexity.

Belongs to the wetA family.

BrlA, abaA and wetA are pivotal regulators of conidiophore development and conidium maturation. They act individually and together to regulate their own expression and that of numerous other sporulation-specific genes. Plays a crucial role in pigmentation and conidial cell wall integrity. This Penicillium digitatum (strain PHI26 / CECT 20796) (Green mold) protein is Developmental regulatory protein wetA.